We begin with the raw amino-acid sequence, 405 residues long: MIQWFLKYRPRSLKDVENQDDAKKQLQEWIESWLNGNSNVKAVLLHGPPGVGKTVLAEALAHDYNFELLEMNASDSRKLQDIKSIAEKAAVYGSIFGTKGKLILLDEVDGINVREDTGAIQGILELIEKTKYPIIMTANDPWNPGLRELRNKAKMIELSKLGKYPLRRILKKICQAEKIICDDEALNYIIDSSEGDARYAINILQGIGEGYGKVTLNLVESLAKRKERELDPFETLRDIFWARYAWQAKNAATSAQIDYDMLIRWISENIPIQYDNIEDIWRAFDALSRASIFLKRAKSGDWDLLSYAYDMMSSGVAFAEPEKKKPNWKPKWKKYQFPSYIQLLSKSKDIRDTRDEIIKKLAIHSSFNKALNDTYPFFLLFYKKYDKHLNLNTKEKEYLSSISKS.

47–54 (GPPGVGKT) contacts ATP.

This sequence belongs to the activator 1 small subunits family. RfcL subfamily. As to quaternary structure, heteropentamer composed of four small subunits (RfcS) and one large subunit (RfcL). Probably interacts with PCNA subunit PCNA3.

Its function is as follows. Part of the RFC clamp loader complex which loads the PCNA sliding clamp onto DNA. The complex possesses DNA-dependent ATPase activity. This is Replication factor C large subunit (rfcL) from Saccharolobus solfataricus (strain ATCC 35092 / DSM 1617 / JCM 11322 / P2) (Sulfolobus solfataricus).